The following is a 183-amino-acid chain: Peptide methionine sulfoxide reductase MsrA 1 (183 aa).

Cysteine 12 is an active-site residue.

It belongs to the MsrA Met sulfoxide reductase family.

The catalysed reaction is L-methionyl-[protein] + [thioredoxin]-disulfide + H2O = L-methionyl-(S)-S-oxide-[protein] + [thioredoxin]-dithiol. The enzyme catalyses [thioredoxin]-disulfide + L-methionine + H2O = L-methionine (S)-S-oxide + [thioredoxin]-dithiol. In terms of biological role, has an important function as a repair enzyme for proteins that have been inactivated by oxidation. Catalyzes the reversible oxidation-reduction of methionine sulfoxide in proteins to methionine. The polypeptide is Peptide methionine sulfoxide reductase MsrA 1 (msrA1) (Lactococcus lactis subsp. lactis (strain IL1403) (Streptococcus lactis)).